The following is a 506-amino-acid chain: GMP synthase [glutamine-hydrolyzing] (506 aa).

In terms of domain architecture, Glutamine amidotransferase type-1 spans 3 to 188 (GFVILDFGSQ…AQGMCKAPAD (186 aa)). The active-site Nucleophile is the Cys80. Residues His162 and Glu164 contribute to the active site. Residues 189 to 381 (WDAPHIKDIL…LGLPKEMLWR (193 aa)) form the GMPS ATP-PPase domain. An ATP-binding site is contributed by 217-223 (SGGVDST).

Homodimer.

It catalyses the reaction XMP + L-glutamine + ATP + H2O = GMP + L-glutamate + AMP + diphosphate + 2 H(+). It participates in purine metabolism; GMP biosynthesis; GMP from XMP (L-Gln route): step 1/1. Catalyzes the synthesis of GMP from XMP. The sequence is that of GMP synthase [glutamine-hydrolyzing] from Bdellovibrio bacteriovorus (strain ATCC 15356 / DSM 50701 / NCIMB 9529 / HD100).